The following is a 178-amino-acid chain: Gamma-crystallin S (178 aa).

N-acetylserine is present on Ser-2. The N-terminal arm stretch occupies residues 2–5 (SKSG). Beta/gamma crystallin 'Greek key' domains lie at 6-44 (TKIT…RVEG) and 45-87 (GTWA…RAVH). The tract at residues 88–93 (LSSGGQ) is connecting peptide. 2 consecutive Beta/gamma crystallin 'Greek key' domains span residues 94–134 (YKIQ…KVLD) and 135–177 (GVWI…RRIV).

Belongs to the beta/gamma-crystallin family. As to quaternary structure, monomer.

Its function is as follows. Crystallins are the dominant structural components of the vertebrate eye lens. The protein is Gamma-crystallin S (CRYGS) of Canis lupus familiaris (Dog).